We begin with the raw amino-acid sequence, 148 residues long: Large ribosomal subunit protein bL9 (148 aa).

Belongs to the bacterial ribosomal protein bL9 family.

Its function is as follows. Binds to the 23S rRNA. The chain is Large ribosomal subunit protein bL9 from Listeria monocytogenes serotype 4b (strain CLIP80459).